The sequence spans 367 residues: DNA replication and repair protein RecF (367 aa).

30-37 (GANGSGKT) serves as a coordination point for ATP.

The protein belongs to the RecF family.

Its subcellular location is the cytoplasm. Its function is as follows. The RecF protein is involved in DNA metabolism; it is required for DNA replication and normal SOS inducibility. RecF binds preferentially to single-stranded, linear DNA. It also seems to bind ATP. In Pseudomonas syringae pv. syringae (strain B728a), this protein is DNA replication and repair protein RecF.